Here is a 664-residue protein sequence, read N- to C-terminus: Translation factor guf1, mitochondrial (664 aa).

Residues 1 to 43 (MRGCLQLARWLSAGPKCPAASLPKAPSGLYNTIRSFTSSAQLA) constitute a mitochondrion transit peptide. Residues 66–246 (DRYRNFCIVA…TVVEKIPAPV (181 aa)) form the tr-type G domain. GTP is bound by residues 75-82 (AHVDHGKS), 139-143 (DTPGH), and 193-196 (NKVD).

It belongs to the TRAFAC class translation factor GTPase superfamily. Classic translation factor GTPase family. LepA subfamily.

It is found in the mitochondrion inner membrane. It carries out the reaction GTP + H2O = GDP + phosphate + H(+). Its function is as follows. Promotes mitochondrial protein synthesis. May act as a fidelity factor of the translation reaction, by catalyzing a one-codon backward translocation of tRNAs on improperly translocated ribosomes. Binds to mitochondrial ribosomes in a GTP-dependent manner. The sequence is that of Translation factor guf1, mitochondrial (guf1) from Aspergillus oryzae (strain ATCC 42149 / RIB 40) (Yellow koji mold).